Consider the following 455-residue polypeptide: Protein 60A (455 aa).

The first 36 residues, 1–36 (MSGLRNTSEAVAVLASLGLGMVLLMFVATTPPAVEA), serve as a signal peptide directing secretion. Residues 37 to 335 (TQSGIYIDNG…SASHPRKRKK (299 aa)) constitute a propeptide that is removed on maturation. The span at 108 to 118 (GLSDQDEDDDY) shows a compositional bias: acidic residues. The segment at 108 to 138 (GLSDQDEDDDYERGHRSRRSADLEEDEGEQQ) is disordered. 2 N-linked (GlcNAc...) asparagine glycosylation sites follow: asparagine 238 and asparagine 250. A disordered region spans residues 316–345 (AHSSHHRSKRSASHPRKRKKSVSPNNVPLL). Positions 318 to 336 (SSHHRSKRSASHPRKRKKS) are enriched in basic residues. 3 disulfide bridges follow: cysteine 354–cysteine 420, cysteine 383–cysteine 452, and cysteine 387–cysteine 454. Asparagine 396 carries N-linked (GlcNAc...) asparagine glycosylation.

This sequence belongs to the TGF-beta family. Homodimer; disulfide-linked. Interacts with nord and dpp. In terms of tissue distribution, expressed in cells of the developing foregut and hindgut during germ band retraction and later embryonic stages. Expressed in the wing disk, mainly in the posterior compartment in the pteropleural and medial regions extending into the progenitors of the scutellum. High levels are found within the posterior and anterior compartments of the wing pouch and low levels in the hinge region. In the eye/antennal disk, expression is highest anterior to the morphogenetic furrow and in the medial regions with lower levels of expression posterior to the morphogenetic furrow. Expressed throughout the posterior compartment of the leg imaginal disks and within the ventral anterior compartment.

It localises to the secreted. Its function is as follows. Required for the growth of imaginal tissues and for patterning of the adult wing. The protein is Protein 60A (gbb) of Drosophila melanogaster (Fruit fly).